Reading from the N-terminus, the 532-residue chain is tRNA-2-methylthio-N(6)-dimethylallyladenosine synthase 2 (532 aa).

The interval 1 to 21 (MTSTVAHGAGSAGPADDAEPM) is disordered. The MTTase N-terminal domain occupies 24-140 (RTYQVRTYGC…LPALLDRARH (117 aa)). Residues Cys-33, Cys-69, Cys-103, Cys-177, Cys-181, and Cys-184 each coordinate [4Fe-4S] cluster. A Radical SAM core domain is found at 163–399 (RESAYAAWVS…VELQEQISLE (237 aa)). The TRAM domain maps to 402–470 (RAIVGQRVEL…PHHLIADGGI (69 aa)). The segment at 510–532 (TSCGSAGGCGSADGAGSSAGDPQ) is disordered. Residues 523–532 (GAGSSAGDPQ) show a composition bias toward low complexity.

This sequence belongs to the methylthiotransferase family. MiaB subfamily. Monomer. Requires [4Fe-4S] cluster as cofactor.

The protein resides in the cytoplasm. It carries out the reaction N(6)-dimethylallyladenosine(37) in tRNA + (sulfur carrier)-SH + AH2 + 2 S-adenosyl-L-methionine = 2-methylsulfanyl-N(6)-dimethylallyladenosine(37) in tRNA + (sulfur carrier)-H + 5'-deoxyadenosine + L-methionine + A + S-adenosyl-L-homocysteine + 2 H(+). Functionally, catalyzes the methylthiolation of N6-(dimethylallyl)adenosine (i(6)A), leading to the formation of 2-methylthio-N6-(dimethylallyl)adenosine (ms(2)i(6)A) at position 37 in tRNAs that read codons beginning with uridine. This is tRNA-2-methylthio-N(6)-dimethylallyladenosine synthase 2 from Mycobacterium marinum (strain ATCC BAA-535 / M).